The sequence spans 330 residues: MSQNTLKVHDLNEDAEFDENGVEVFDEKALVEEEPSDNDLAEEELLSQGATQRVLDATQLYLGEIGYSPLLTAEEEVYFARRALRGDVASRRRMIESNLRLVVKIARRYGNRGLALLDLIEEGNLGLIRAVEKFDPERGFRFSTYATWWIRQTIERAIMNQTRTIRLPIHIVKELNVYLRTARELSHKLDHEPSAEEIAEQLDKPVDDVSRMLRLNERITSVDTPLGGDSEKALLDILADEKENGPEDTTQDDDMKQSIVKWLFELNAKQREVLARRFGLLGYEAATLEDVGREIGLTRERVRQIQVEGLRRLREILQTQGLNIEALFRK.

A sigma-70 factor domain-1 region spans residues 56–89 (DATQLYLGEIGYSPLLTAEEEVYFARRALRGDVA). A sigma-70 factor domain-2 region spans residues 94 to 164 (MIESNLRLVV…ERAIMNQTRT (71 aa)). An Interaction with polymerase core subunit RpoC motif is present at residues 118–121 (DLIE). The sigma-70 factor domain-3 stretch occupies residues 174-249 (ELNVYLRTAR…DEKENGPEDT (76 aa)). The sigma-70 factor domain-4 stretch occupies residues 262–315 (WLFELNAKQREVLARRFGLLGYEAATLEDVGREIGLTRERVRQIQVEGLRRLRE). The H-T-H motif DNA-binding region spans 288-307 (LEDVGREIGLTRERVRQIQV).

Belongs to the sigma-70 factor family. RpoS subfamily. As to quaternary structure, interacts with the RNA polymerase core enzyme.

It localises to the cytoplasm. Functionally, sigma factors are initiation factors that promote the attachment of RNA polymerase to specific initiation sites and are then released. This sigma factor is the master transcriptional regulator of the stationary phase and the general stress response. This is RNA polymerase sigma factor RpoS from Shigella flexneri.